The chain runs to 471 residues: Alpha-galactosidase 2 (471 aa).

Residues 1-18 form the signal peptide; the sequence is MFAFYFLTACISLKGVFG. C42 and C74 are joined by a disulfide. Residues D72 and D73 each coordinate substrate. N105 carries N-linked (GlcNAc...) asparagine glycosylation. Cysteines 121 and 151 form a disulfide. Position 147 (K147) interacts with substrate. D149 (nucleophile) is an active-site residue. N-linked (GlcNAc...) asparagine glycosylation is present at N175. Substrate is bound at residue R205. The active-site Proton donor is the D209. 2 disulfides stabilise this stretch: C221-C237 and C223-C230. Residue Q251 participates in substrate binding. N270, N370, N403, N413, N422, N435, and N454 each carry an N-linked (GlcNAc...) asparagine glycan.

The protein belongs to the glycosyl hydrolase 27 family. As to quaternary structure, homotetramer.

Its subcellular location is the secreted. It catalyses the reaction Hydrolysis of terminal, non-reducing alpha-D-galactose residues in alpha-D-galactosides, including galactose oligosaccharides, galactomannans and galactolipids.. This is Alpha-galactosidase 2 (MEL2) from Saccharomyces cerevisiae (Baker's yeast).